The following is a 273-amino-acid chain: Phosphatidylglycerol--prolipoprotein diacylglyceryl transferase (273 aa).

Transmembrane regions (helical) follow at residues V21–A41, L60–Y80, V95–W115, F124–M144, S176–I196, G203–V223, and I237–W257. R143 is an a 1,2-diacyl-sn-glycero-3-phospho-(1'-sn-glycerol) binding site.

It belongs to the Lgt family.

It is found in the cell inner membrane. It catalyses the reaction L-cysteinyl-[prolipoprotein] + a 1,2-diacyl-sn-glycero-3-phospho-(1'-sn-glycerol) = an S-1,2-diacyl-sn-glyceryl-L-cysteinyl-[prolipoprotein] + sn-glycerol 1-phosphate + H(+). Its pathway is protein modification; lipoprotein biosynthesis (diacylglyceryl transfer). In terms of biological role, catalyzes the transfer of the diacylglyceryl group from phosphatidylglycerol to the sulfhydryl group of the N-terminal cysteine of a prolipoprotein, the first step in the formation of mature lipoproteins. This is Phosphatidylglycerol--prolipoprotein diacylglyceryl transferase from Vibrio campbellii (strain ATCC BAA-1116).